The chain runs to 361 residues: Phospho-N-acetylmuramoyl-pentapeptide-transferase (361 aa).

10 consecutive transmembrane segments (helical) span residues 25–45 (TGGA…WIID), 72–92 (TPTM…VLWA), 95–115 (LNPY…VGFY), 135–155 (LLIE…LGRA), 169–189 (VMLN…VGAG), 200–220 (GLAI…SYLA), 240–260 (LAVL…FNAP), 264–284 (IFMG…IAVA), 289–309 (IVLA…IVQV), and 338–358 (QIVI…LSTL).

It belongs to the glycosyltransferase 4 family. MraY subfamily. The cofactor is Mg(2+).

Its subcellular location is the cell inner membrane. The catalysed reaction is UDP-N-acetyl-alpha-D-muramoyl-L-alanyl-gamma-D-glutamyl-meso-2,6-diaminopimeloyl-D-alanyl-D-alanine + di-trans,octa-cis-undecaprenyl phosphate = di-trans,octa-cis-undecaprenyl diphospho-N-acetyl-alpha-D-muramoyl-L-alanyl-D-glutamyl-meso-2,6-diaminopimeloyl-D-alanyl-D-alanine + UMP. The protein operates within cell wall biogenesis; peptidoglycan biosynthesis. Catalyzes the initial step of the lipid cycle reactions in the biosynthesis of the cell wall peptidoglycan: transfers peptidoglycan precursor phospho-MurNAc-pentapeptide from UDP-MurNAc-pentapeptide onto the lipid carrier undecaprenyl phosphate, yielding undecaprenyl-pyrophosphoryl-MurNAc-pentapeptide, known as lipid I. The polypeptide is Phospho-N-acetylmuramoyl-pentapeptide-transferase (Rhodopseudomonas palustris (strain TIE-1)).